Consider the following 316-residue polypeptide: Probable thioesterase lcsE (316 aa).

The protein belongs to the AMT4 thioesterase family.

Its pathway is secondary metabolite biosynthesis. Functionally, probable thioesterase; part of the gene cluster that mediates the biosynthesis of the lipopeptide antibiotics leucinostatins that show extensive biological activities, including antimalarial, antiviral, antibacterial, antifungal, and antitumor activities, as well as phytotoxic. Leucinostatin A contains nine amino acid residues, including the unusual amino acid 4-methyl-L-proline (MePro), 2-amino-6-hydroxy-4-methyl-8-oxodecanoic acid (AHyMeOA), 3-hydroxyleucine (HyLeu), alpha-aminoisobutyric acid (AIB), beta-Ala, a 4-methylhex-2-enoic acid at the N-terminus as well as a N1,N1-dimethylpropane-1,2-diamine (DPD) at the C-terminus. The biosynthesis of leucinostatins is probably initiated with the assembly of 4-methylhex-2-enoic acid by a reducing PKS. Two reducing polyketide synthases, lcsB and lcsC, have been identified in the cluster and it is not clear which is the one that assembles 4-methylhex-2-enoic acid since both contain KS, AT, DH, cMT, ER, KR and ACP domains. The polyketide residue might be transferred to the NRPS lcsA, mediated by two additional enzymes, the acyl-CoA ligase lcsD and the thioesterase lcsE. The linear polyketide carboxylic acid, which is released from PKS, is converted to a CoA thioester by lcsD, and then lcsE hydrolyzes the thiol bond and shuttles the polyketide intermediate to lcsA. The C domain of the first module catalyzed the condensation of 4-methylhex-2-enoic acid and MePro carried by domain A1, followed by successive condensations of nine amino acids to trigger the elongation of the linear peptide. A5 and A6 domains of lcsA are proposed to incorporate leucine, A2 AHyMeOA, and A3 incorporates HyLeu. A4, A7 and A8 incorporate AIB. The AHyMeOA in leucinostatin A activated by the A2 might be produced by the second PKS (lcsB or lcsC) present within the cluster. The MePro is probably produced via leucine cyclization and may originate from a separate pathway, independent of the cluster. Another nonproteinogenic amino acid, beta-Ala, could be produced by an aspartic acid decarboxylase also localized outside of the cluster. Two candidates are VFPBJ_01400 and VFPBJ_10476. The final peptide scaffold may be released by the NAD(P)H-dependent thioester reductase (TE) at the C-terminal region of lcsA. Transamination of the lcsA product by the transaminase lcsP may produce DPD at the C-terminus. Further hydroxylation steps performed alternatively by the cytochrome P450 monooxygenases lcsI, lcsK and lcsN then yield the non-methylated leucinostatins precursor. It is also possible that leucines can be hydroxylated prior to their incorporation into the peptide. Varying extents of methylation then lead to the formation of leucinostatins A and B. The chain is Probable thioesterase lcsE from Purpureocillium lilacinum (Paecilomyces lilacinus).